The chain runs to 258 residues: Imidazole glycerol phosphate synthase subunit HisF (258 aa).

Active-site residues include Asp12 and Asp131.

Belongs to the HisA/HisF family. In terms of assembly, heterodimer of HisH and HisF.

The protein resides in the cytoplasm. The enzyme catalyses 5-[(5-phospho-1-deoxy-D-ribulos-1-ylimino)methylamino]-1-(5-phospho-beta-D-ribosyl)imidazole-4-carboxamide + L-glutamine = D-erythro-1-(imidazol-4-yl)glycerol 3-phosphate + 5-amino-1-(5-phospho-beta-D-ribosyl)imidazole-4-carboxamide + L-glutamate + H(+). Its pathway is amino-acid biosynthesis; L-histidine biosynthesis; L-histidine from 5-phospho-alpha-D-ribose 1-diphosphate: step 5/9. IGPS catalyzes the conversion of PRFAR and glutamine to IGP, AICAR and glutamate. The HisF subunit catalyzes the cyclization activity that produces IGP and AICAR from PRFAR using the ammonia provided by the HisH subunit. This chain is Imidazole glycerol phosphate synthase subunit HisF, found in Sinorhizobium medicae (strain WSM419) (Ensifer medicae).